The sequence spans 649 residues: UvrABC system protein B (649 aa).

The 154-residue stretch at 25 to 178 (EHYKDGIKEQ…EDILKELVKM (154 aa)) folds into the Helicase ATP-binding domain. 38-45 (GVTGSGKT) provides a ligand contact to ATP. Residues 91–114 (YYDYYQPEAYVAQTDTFIDKESAI) carry the Beta-hairpin motif. The 167-residue stretch at 428–594 (QVDDLLGEIR…SVVRKLKDKK (167 aa)) folds into the Helicase C-terminal domain. Residues 614 to 649 (DEIIKELEKEMKQAAKDLNFEKAAKLRDRIMELKEE) form the UVR domain.

This sequence belongs to the UvrB family. In terms of assembly, forms a heterotetramer with UvrA during the search for lesions. Interacts with UvrC in an incision complex.

The protein localises to the cytoplasm. The UvrABC repair system catalyzes the recognition and processing of DNA lesions. A damage recognition complex composed of 2 UvrA and 2 UvrB subunits scans DNA for abnormalities. Upon binding of the UvrA(2)B(2) complex to a putative damaged site, the DNA wraps around one UvrB monomer. DNA wrap is dependent on ATP binding by UvrB and probably causes local melting of the DNA helix, facilitating insertion of UvrB beta-hairpin between the DNA strands. Then UvrB probes one DNA strand for the presence of a lesion. If a lesion is found the UvrA subunits dissociate and the UvrB-DNA preincision complex is formed. This complex is subsequently bound by UvrC and the second UvrB is released. If no lesion is found, the DNA wraps around the other UvrB subunit that will check the other stand for damage. The chain is UvrABC system protein B from Methanosphaera stadtmanae (strain ATCC 43021 / DSM 3091 / JCM 11832 / MCB-3).